A 53-amino-acid polypeptide reads, in one-letter code: UPF0391 membrane protein GFO_1615 (53 aa).

2 helical membrane passes run Leu4 to Ala24 and Ala27 to Leu47.

It belongs to the UPF0391 family.

Its subcellular location is the cell membrane. In Christiangramia forsetii (strain DSM 17595 / CGMCC 1.15422 / KT0803) (Gramella forsetii), this protein is UPF0391 membrane protein GFO_1615.